Here is a 217-residue protein sequence, read N- to C-terminus: Adenylate kinase (217 aa).

10–15 (GAGKGT) is an ATP binding site. Residues 30-59 (STGDMLREAVAKGTELGKKAKEYMDKGELV) are NMP. AMP is bound by residues Thr-31, Arg-36, 57–59 (ELV), 85–88 (GFPR), and Gln-92. Residues 126-163 (YRRTCRNCGAVYHLIYAPPKEDNKCDKCGGELYQRDDD) are LID. Arg-127 contributes to the ATP binding site. Residues Cys-130 and Cys-133 each coordinate Zn(2+). 136–137 (VY) provides a ligand contact to ATP. Positions 150 and 153 each coordinate Zn(2+). AMP contacts are provided by Arg-160 and Arg-171. Lys-199 is an ATP binding site.

The protein belongs to the adenylate kinase family. In terms of assembly, monomer.

Its subcellular location is the cytoplasm. It carries out the reaction AMP + ATP = 2 ADP. Its pathway is purine metabolism; AMP biosynthesis via salvage pathway; AMP from ADP: step 1/1. In terms of biological role, catalyzes the reversible transfer of the terminal phosphate group between ATP and AMP. Plays an important role in cellular energy homeostasis and in adenine nucleotide metabolism. This chain is Adenylate kinase, found in Archaeoglobus fulgidus (strain ATCC 49558 / DSM 4304 / JCM 9628 / NBRC 100126 / VC-16).